A 393-amino-acid chain; its full sequence is MSVSFTRSFPRAFIRSYGTVQSSPTAASFASRIPPALQEAVAATAPRTNWTRDEVQQIYETPLNQLTYAAAAVHRRFHDPSAIQMCTLMNIKTGGCSEDCSYCAQSSRYSTGLKATKMSPVDDVLEKARIAKANGSTRFCMGAAWRDMRGRKTSLKNVKQMVSGVREMGMEVCVTLGMIDADQAKELKDAGLTAYNHNLDTSREFYPTIITTRSYDERLKTLSHVRDAGINVCSGGILGLGEADSDRIGLIHTVSSLPSHPESFPVNALVPIKGTPLGDRKMISFDKLLRTVATARIVLPATIVRLAAGRISLTEEQQVACFMAGANAVFTGEKMLTTDCNGWDEDRAMFDRWGFYPMRSFEKETNAATPQQHVDSVAHESEKNPAAPAAEAL.

The transit peptide at 1–20 (MSVSFTRSFPRAFIRSYGTV) directs the protein to the mitochondrion. Residues 81 to 310 (SAIQMCTLMN…ATIVRLAAGR (230 aa)) enclose the Radical SAM core domain. [4Fe-4S] cluster is bound by residues cysteine 96, cysteine 100, and cysteine 103. Cysteine 140, cysteine 173, cysteine 233, and arginine 305 together coordinate [2Fe-2S] cluster. The disordered stretch occupies residues 366–393 (NAATPQQHVDSVAHESEKNPAAPAAEAL).

This sequence belongs to the radical SAM superfamily. Biotin synthase family. It depends on [4Fe-4S] cluster as a cofactor. [2Fe-2S] cluster is required as a cofactor.

The protein resides in the mitochondrion. The catalysed reaction is (4R,5S)-dethiobiotin + (sulfur carrier)-SH + 2 reduced [2Fe-2S]-[ferredoxin] + 2 S-adenosyl-L-methionine = (sulfur carrier)-H + biotin + 2 5'-deoxyadenosine + 2 L-methionine + 2 oxidized [2Fe-2S]-[ferredoxin]. It functions in the pathway cofactor biosynthesis; biotin biosynthesis; biotin from 7,8-diaminononanoate: step 2/2. Functionally, biotin synthase; part of the cluster involved in the biosynthesis of biotin (also known as vitamin B8 or vitamin H), a water-soluble vitamin that functions as a prosthetic group of many carboxylases, such as acetyl-CoA carboxylase and pyruvate carboxylase. Catalyzes the conversion of dethiobiotin (DTB) to biotin by the insertion of a sulfur atom into dethiobiotin via a radical-based mechanism. The polypeptide is Biotin synthase, mitochondrial (Emericella nidulans (strain FGSC A4 / ATCC 38163 / CBS 112.46 / NRRL 194 / M139) (Aspergillus nidulans)).